Reading from the N-terminus, the 333-residue chain is MDVVSLDKPFMYFEEIDNELDYEPESANEVAKKLPYQGQLKLLLGELFFLSKLQRHGILDGATVVYIGSAPGTHIRYLRDHFYNLGVIIKWMLIDGRHHDPILNGLRDVTLVTRFVDEEYLRSIKKQLHPSKIILISDVRSKRGGNEPSTADLLSNYALQNVMISILNPVASSLKWRCPFPDQWIKDFYIPHGNKMLQPFAPSYSAEMRLLSIYTGENMRLTRVTKSDAVNYEKKMYYLNKIVRNKVVVNFDYPNQEYDYFHMYFMLRTVYCNKTFPTTKAKVLFLQQSIFRFLNIPTTSTEKVSHEPIQRKISSKNSMSKNRNSKRSVRSNK.

Y22 contributes to the mRNA binding site. The S-adenosyl-L-methionine site is built by Q39, Y66, G68, G72, D95, R97, V116, and D138. The binding to NPH-I stretch occupies residues P169–V249. A binding to Rap94 region spans residues P169–K333. K175 functions as the For methyltransferase activity in the catalytic mechanism. MRNA is bound by residues R177–F180, D182, S205–E207, and E233. Residues S305–K333 form a disordered region. Over residues R311–N322 the composition is skewed to low complexity. Over residues R323–K333 the composition is skewed to basic residues.

This sequence belongs to the class I-like SAM-binding methyltransferase superfamily. Poxvirus/kinetoplastid 2'-O-MTase family. Interacts with poly(A) polymerase catalytic subunit OPG063. Interacts with OPG109 and OPG123; these interactions might help linking transcription to capping and polyadenylation.

The protein localises to the virion. It catalyses the reaction a 5'-end (N(7)-methyl 5'-triphosphoguanosine)-ribonucleoside in mRNA + S-adenosyl-L-methionine = a 5'-end (N(7)-methyl 5'-triphosphoguanosine)-(2'-O-methyl-ribonucleoside) in mRNA + S-adenosyl-L-homocysteine + H(+). Its function is as follows. Displays methyltransferase, positive regulation of the poly(A) polymerase and transcription elongation activities. Involved in the modification of both mRNA ends and in intermediate and late gene positive transcription elongation. At the mRNAs 5' end, methylates the ribose 2' OH group of the first transcribed nucleotide, thereby producing a 2'-O-methylpurine cap. At the 3' end, functions as a processivity factor which stimulates the activity of the viral poly(A) polymerase OPG063 that creates mRNA's poly(A) tail. In the presence of OPG102, OPG063 does not dissociate from the RNA allowing tail elongation to around 250 adenylates. This is Cap-specific mRNA (nucleoside-2'-O-)-methyltransferase (OPG102) from Vaccinia virus (strain Western Reserve) (VACV).